A 429-amino-acid chain; its full sequence is MQLLAVGLNHTTAPVSLREKVAFPADQLGQAVASARSWYGRSDATTYTDEAAILSTCNRTELYAASNLPGGVNEAIDITAHFLADYHKLPYAELRPYLYALPQDNAVRHAFRVASGLDSMVLGEPQILGQMKDAVRQAEAAGGLGTYLHQMFQRTFAVAKEVRSTTEIGAHSVSMAAASVRLSQRIFDKISEQNVLFIGAGEMIELSATHFAAQNPKSVTIANRTLERGQTLAHRFNGKAIRLADLPDQLASYDIVISSTASSLPIIGLGMVERAIKARRHKPMFMVDLAVPRDIEAEIGRLDDVFLYTVDDLGSFVQTGVENRQAAVAQAEAIIETRVRSFMHWIDARAVVPVIQDLHESSETMRMIELERARKLLAKGEDIDAVLEALSKGLTAKFLHGPQQALNNAQGDERARLAALLPQLFRTKR.

Residues 56 to 59 (TCNR), S119, 124 to 126 (EPQ), and Q130 contribute to the substrate site. The Nucleophile role is filled by C57. 199 to 204 (GAGEMI) is an NADP(+) binding site.

This sequence belongs to the glutamyl-tRNA reductase family. Homodimer.

The catalysed reaction is (S)-4-amino-5-oxopentanoate + tRNA(Glu) + NADP(+) = L-glutamyl-tRNA(Glu) + NADPH + H(+). It participates in porphyrin-containing compound metabolism; protoporphyrin-IX biosynthesis; 5-aminolevulinate from L-glutamyl-tRNA(Glu): step 1/2. Catalyzes the NADPH-dependent reduction of glutamyl-tRNA(Glu) to glutamate 1-semialdehyde (GSA). This chain is Glutamyl-tRNA reductase, found in Janthinobacterium sp. (strain Marseille) (Minibacterium massiliensis).